A 95-amino-acid chain; its full sequence is Integration host factor subunit beta (95 aa).

A disordered region spans residues 52 to 95; that stretch reads SLHHRPPRVGRNPKTGESVHLPSRRVPHFKPGKELRDRVNSIKD. The span at 82-95 shows a compositional bias: basic and acidic residues; it reads PGKELRDRVNSIKD.

Belongs to the bacterial histone-like protein family. As to quaternary structure, heterodimer of an alpha and a beta chain.

Its function is as follows. This protein is one of the two subunits of integration host factor, a specific DNA-binding protein that functions in genetic recombination as well as in transcriptional and translational control. This Methylococcus capsulatus (strain ATCC 33009 / NCIMB 11132 / Bath) protein is Integration host factor subunit beta.